The chain runs to 131 residues: QRFP-like peptide (131 aa).

The first 25 residues, 1–25, serve as a signal peptide directing secretion; it reads MGVRVMRSRICVIGLLVLMLTQSEA. Residues 26-94 constitute a propeptide that is removed on maturation; it reads YSFREKSWRT…DDGISPADKR (69 aa). A disordered region spans residues 48-131; that stretch reads RRDGGDQAPS…RESRRSFGSD (84 aa). The span at 97 to 106 shows a compositional bias: polar residues; it reads MLQQLAQQLK. F119 carries the post-translational modification Phenylalanine amide. Basic and acidic residues predominate over residues 120–131; it reads GKRESRRSFGSD. The propeptide occupies 123–131; that stretch reads ESRRSFGSD.

This sequence belongs to the RFamide neuropeptide family.

It is found in the secreted. Ligand for the G-protein coupled receptor QRFPR. The polypeptide is QRFP-like peptide (Branchiostoma floridae (Florida lancelet)).